A 214-amino-acid chain; its full sequence is Dynein axonemal assembly factor 6 (214 aa).

2 disordered regions span residues 1 to 22 and 34 to 68; these read MESE…QNVD and ALSK…NIGP.

This sequence belongs to the PIH1 family. As to quaternary structure, interacts with HSPA1A/B and HSP90AA1. Interacts with DNAAF2 and DNAAF4. Interacts wuth DNAI2. In terms of tissue distribution, expressed in testis, small intestine, prostate, adrenal gland, spleen, lung, bladder, breast and ovary. Expressed in ciliated epithelial cells.

The protein localises to the cytoplasm. It is found in the golgi apparatus. The protein resides in the trans-Golgi network. Its function is as follows. Plays a role in cytoplasmic pre-assembly of axonemal dynein. The sequence is that of Dynein axonemal assembly factor 6 from Homo sapiens (Human).